A 371-amino-acid polypeptide reads, in one-letter code: tRNA-specific 2-thiouridylase MnmA (371 aa).

Residues Gly13 to Ser20 and Met39 each bind ATP. The interval Asn99–Asp101 is interaction with target base in tRNA. Cys104 acts as the Nucleophile in catalysis. Residues Cys104 and Cys200 are joined by a disulfide bond. ATP is bound at residue Gly128. The interaction with tRNA stretch occupies residues Lys150–Gln152. Cys200 acts as the Cysteine persulfide intermediate in catalysis. Residues Arg308–Tyr309 form an interaction with tRNA region.

Belongs to the MnmA/TRMU family.

It localises to the cytoplasm. It carries out the reaction S-sulfanyl-L-cysteinyl-[protein] + uridine(34) in tRNA + AH2 + ATP = 2-thiouridine(34) in tRNA + L-cysteinyl-[protein] + A + AMP + diphosphate + H(+). In terms of biological role, catalyzes the 2-thiolation of uridine at the wobble position (U34) of tRNA, leading to the formation of s(2)U34. This chain is tRNA-specific 2-thiouridylase MnmA, found in Listeria monocytogenes serotype 4b (strain CLIP80459).